The chain runs to 183 residues: Pyruvoyl-dependent arginine decarboxylase (183 aa).

Serine 44 is subject to Pyruvic acid (Ser).

The protein belongs to the PdaD family. It depends on pyruvate as a cofactor.

It carries out the reaction L-arginine + H(+) = agmatine + CO2. This is Pyruvoyl-dependent arginine decarboxylase from Nitrosopumilus maritimus (strain SCM1).